Here is a 334-residue protein sequence, read N- to C-terminus: Protein-methionine-sulfoxide reductase catalytic subunit MsrP (334 aa).

Residues 1–44 (MKKNQFLKESDVTAESVFFMKRRQVLKALGISATALSLPHAAHA) constitute a signal peptide (tat-type signal). Mo-molybdopterin-binding positions include Asn88, 91 to 92 (YE), Cys146, Thr181, Asn233, Arg238, and 249 to 251 (GIK).

It belongs to the MsrP family. As to quaternary structure, heterodimer of a catalytic subunit (MsrP) and a heme-binding subunit (MsrQ). Requires Mo-molybdopterin as cofactor. In terms of processing, exported by the Tat system. Can also be exported by the Sec system.

Its subcellular location is the periplasm. The enzyme catalyses L-methionyl-[protein] + a quinone + H2O = L-methionyl-(S)-S-oxide-[protein] + a quinol. It catalyses the reaction L-methionyl-[protein] + a quinone + H2O = L-methionyl-(R)-S-oxide-[protein] + a quinol. In terms of biological role, part of the MsrPQ system that repairs oxidized periplasmic proteins containing methionine sulfoxide residues (Met-O), using respiratory chain electrons. Thus protects these proteins from oxidative-stress damage caused by reactive species of oxygen and chlorine. MsrPQ is essential for the maintenance of envelope integrity under bleach stress, rescuing a wide series of structurally unrelated periplasmic proteins from methionine oxidation, including the primary periplasmic chaperone SurA and the lipoprotein Pal. The catalytic subunit MsrP is non-stereospecific, being able to reduce both (R-) and (S-) diastereoisomers of methionine sulfoxide. Can catalyze the reduction of a variety of substrates in vitro, including dimethyl sulfoxide, trimethylamine N-oxide, phenylmethyl sulfoxide and L-methionine sulfoxide. Cannot reduce cyclic N-oxides. Shows no activity as sulfite oxidase. This Escherichia coli (strain K12) protein is Protein-methionine-sulfoxide reductase catalytic subunit MsrP.